We begin with the raw amino-acid sequence, 256 residues long: tRNA pseudouridine synthase A (256 aa).

Aspartate 49 functions as the Nucleophile in the catalytic mechanism. Residue tyrosine 104 participates in substrate binding.

This sequence belongs to the tRNA pseudouridine synthase TruA family.

It catalyses the reaction uridine(38/39/40) in tRNA = pseudouridine(38/39/40) in tRNA. Its function is as follows. Formation of pseudouridine at positions 38, 39 and 40 in the anticodon stem and loop of transfer RNAs. This is tRNA pseudouridine synthase A from Methanopyrus kandleri (strain AV19 / DSM 6324 / JCM 9639 / NBRC 100938).